The primary structure comprises 335 residues: Beta-ketoacyl-[acyl-carrier-protein] synthase III 2 (335 aa).

Residues C116 and H256 contribute to the active site. The interval Q257 to R261 is ACP-binding. The active site involves N286.

Belongs to the thiolase-like superfamily. FabH family. Homodimer.

The protein resides in the cytoplasm. The catalysed reaction is malonyl-[ACP] + acetyl-CoA + H(+) = 3-oxobutanoyl-[ACP] + CO2 + CoA. It participates in lipid metabolism; fatty acid biosynthesis. In terms of biological role, catalyzes the condensation reaction of fatty acid synthesis by the addition to an acyl acceptor of two carbons from malonyl-ACP. Catalyzes the first condensation reaction which initiates fatty acid synthesis and may therefore play a role in governing the total rate of fatty acid production. Possesses both acetoacetyl-ACP synthase and acetyl transacylase activities. Its substrate specificity determines the biosynthesis of branched-chain and/or straight-chain of fatty acids. In Bacteroides thetaiotaomicron (strain ATCC 29148 / DSM 2079 / JCM 5827 / CCUG 10774 / NCTC 10582 / VPI-5482 / E50), this protein is Beta-ketoacyl-[acyl-carrier-protein] synthase III 2.